Consider the following 129-residue polypeptide: Natriuretic peptides B (129 aa).

Positions 1–26 (MDPQKALSRTLLLLLFLHLSLLGCRS) are cleaved as a signal peptide. A disulfide bridge links C107 with C123.

Belongs to the natriuretic peptide family. Post-translationally, the precursor molecule is proteolytically cleaved, possibly by FURIN or CORIN, to produce the active peptide. May undergo further proteolytic cleavage by various proteases such as DPP4, MME and possibly FAP, to give rise to a variety of shorter peptides. May be cleaved at Pro-99 by the prolyl endopeptidase FAP (seprase) activity (in vitro). May be degraded by IDE. During IDE degradation, the resulting products initially increase the activation of NPR1 and can also stimulate NPR2 to produce cGMP before the fragments are completely degraded and inactivated by IDE (in vitro).

The protein resides in the secreted. Functionally, cardiac hormone that plays a key role in mediating cardio-renal homeostasis. May also function as a paracrine antifibrotic factor in the heart. Acts by specifically binding and stimulating NPR1 to produce cGMP, which in turn activates effector proteins that drive various biological responses. Involved in regulating the extracellular fluid volume and maintaining the fluid-electrolyte balance through natriuresis, diuresis, vasorelaxation, and inhibition of renin and aldosterone secretion. Binds the clearance receptor NPR3. The chain is Natriuretic peptides B (NPPB) from Ovis aries (Sheep).